The chain runs to 412 residues: MTPSISWGLLLLAGLFCLVPSFLAEDVQETDTSRRDSVPASHDTPYNLELSISLYRELGHKSTTSNIFFSQVSIATAFAMLSLGEKGDTHTQILEGLQFNLTQTSEADIHKAFQHLLQTLNRPDSELQLSTGNGSLLNNDLKLVEKFLEEAKNNYHSEVFSVNFAESEEAKKVINDFVEKGTQGKIAEAVKDPDEDTVFALANYILFKGKWKKPFDPKHTEEAEFHVDTVTTVKVPMMTLTGMLDVHHCSTLSSWVLLMDYLGNRTAVFLLPDDGKMQHLEQTLNKELISKFLLNRHRRLAQVHLPRLSLSGNYTLNTLMSHLGITRIFNNGADLSGITEENAPLKLSKAADKAVLTMDETGTEAAAATVLQAVPMSMPPILNFNKPFIFIIVEEHTQSPLFVGKVVDPTRK.

Positions 1–24 (MTPSISWGLLLLAGLFCLVPSFLA) are cleaved as a signal peptide. Phosphoserine is present on S33. N-linked (GlcNAc...) asparagine glycans are attached at residues N100, N133, N264, and N313. Residues 367 to 386 (AATVLQAVPMSMPPILNFNK) are RCL. Phosphoserine is present on S377.

It belongs to the serpin family. Interacts with CELA2A. Interacts with ERGIC3 and LMAN1/ERGIC53. Interacts with PRSS1/Trypsin. Expressed not only in liver but also in kidney tubule cells, where it is regulated by androgens during development.

Its subcellular location is the secreted. Functionally, inhibitor of serine proteases. Its primary target is elastase, but it also has a moderate affinity for plasmin and thrombin. This is Alpha-1-antiproteinase (Serpina1) from Mus caroli (Ryukyu mouse).